The sequence spans 365 residues: MTRLKNDTLLRALLRQPTEYTPVWLMRQAGRYLSEYNQTRARAGNFLALCKNPDFATEVTMQPLARFPLDAAILFSDILTIPDAMGLGLYFAEGEGPRFERPLREEWEIRALTVPDPAVHLRYVMDAVSQIRKTLDNRVPLIGFSGSPFTLACYMVEGAGGTDFRQIKTMLYRRPDLLHHILDINAQAVTAYLNAQIESGAQAVMIFDTWGGALSHAAYQQFSLRYMTQVLAGLRRYQGAERIPSIVFTKGGGLWLESIADSGCDAVGLDWTVNIGDARRRVGHKVALQGNLDPAVLFAEPGVIAAEVEQILASFGEGSGHIFNLGHGISQFTPPENALTLVEAVHSLSRRFHRADAEGNNSFGS.

Residues 27-31 (RQAGR), D77, Y154, T209, and H327 contribute to the substrate site.

Belongs to the uroporphyrinogen decarboxylase family. Homodimer.

It localises to the cytoplasm. The enzyme catalyses uroporphyrinogen III + 4 H(+) = coproporphyrinogen III + 4 CO2. The protein operates within porphyrin-containing compound metabolism; protoporphyrin-IX biosynthesis; coproporphyrinogen-III from 5-aminolevulinate: step 4/4. Its function is as follows. Catalyzes the decarboxylation of four acetate groups of uroporphyrinogen-III to yield coproporphyrinogen-III. This Nitrosospira multiformis (strain ATCC 25196 / NCIMB 11849 / C 71) protein is Uroporphyrinogen decarboxylase.